A 417-amino-acid polypeptide reads, in one-letter code: UDP-N-acetylmuramoylalanine--D-glutamate ligase (417 aa).

104–110 (GSNGKST) provides a ligand contact to ATP.

This sequence belongs to the MurCDEF family.

It is found in the cytoplasm. It catalyses the reaction UDP-N-acetyl-alpha-D-muramoyl-L-alanine + D-glutamate + ATP = UDP-N-acetyl-alpha-D-muramoyl-L-alanyl-D-glutamate + ADP + phosphate + H(+). It functions in the pathway cell wall biogenesis; peptidoglycan biosynthesis. Cell wall formation. Catalyzes the addition of glutamate to the nucleotide precursor UDP-N-acetylmuramoyl-L-alanine (UMA). This chain is UDP-N-acetylmuramoylalanine--D-glutamate ligase, found in Francisella tularensis subsp. novicida (strain U112).